We begin with the raw amino-acid sequence, 352 residues long: Small ribosomal subunit biogenesis GTPase RsgA 2 (352 aa).

The region spanning 100–257 (RQDGQIIATN…VIDTPGMREL (158 aa)) is the CP-type G domain. Residues 147–150 (TKAD) and 199–207 (GSSGVGKST) contribute to the GTP site. Positions 278, 283, 285, and 291 each coordinate Zn(2+).

This sequence belongs to the TRAFAC class YlqF/YawG GTPase family. RsgA subfamily. In terms of assembly, monomer. Associates with 30S ribosomal subunit, binds 16S rRNA. The cofactor is Zn(2+).

The protein localises to the cytoplasm. Functionally, one of several proteins that assist in the late maturation steps of the functional core of the 30S ribosomal subunit. Helps release RbfA from mature subunits. May play a role in the assembly of ribosomal proteins into the subunit. Circularly permuted GTPase that catalyzes slow GTP hydrolysis, GTPase activity is stimulated by the 30S ribosomal subunit. This is Small ribosomal subunit biogenesis GTPase RsgA 2 from Lactiplantibacillus plantarum (strain ATCC BAA-793 / NCIMB 8826 / WCFS1) (Lactobacillus plantarum).